Consider the following 307-residue polypeptide: Transmembrane and coiled-coil domain-containing protein 5B (307 aa).

Residues 17 to 207 are a coiled coil; sequence FASSLEAVKQ…LEKQISKAQD (191 aa). The chain crosses the membrane as a helical span at residues 243 to 265; sequence YFQYLTFMVLVFIRLLAYVIFHL.

Belongs to the TMCO5 family.

The protein localises to the membrane. This is Transmembrane and coiled-coil domain-containing protein 5B (TMCO5B) from Homo sapiens (Human).